Reading from the N-terminus, the 450-residue chain is Enolase (450 aa).

Gln-173 provides a ligand contact to (2R)-2-phosphoglycerate. The active-site Proton donor is Glu-215. Mg(2+)-binding residues include Asp-254, Glu-308, and Asp-335. Residues Lys-360, Arg-389, Ser-390, and Lys-411 each coordinate (2R)-2-phosphoglycerate. Lys-360 (proton acceptor) is an active-site residue.

It belongs to the enolase family. The cofactor is Mg(2+).

It localises to the cytoplasm. It is found in the secreted. Its subcellular location is the cell surface. It carries out the reaction (2R)-2-phosphoglycerate = phosphoenolpyruvate + H2O. It functions in the pathway carbohydrate degradation; glycolysis; pyruvate from D-glyceraldehyde 3-phosphate: step 4/5. Its function is as follows. Catalyzes the reversible conversion of 2-phosphoglycerate (2-PG) into phosphoenolpyruvate (PEP). It is essential for the degradation of carbohydrates via glycolysis. This is Enolase from Malacoplasma penetrans (strain HF-2) (Mycoplasma penetrans).